Reading from the N-terminus, the 647-residue chain is DNA mismatch repair protein MutL (647 aa).

This sequence belongs to the DNA mismatch repair MutL/HexB family.

In terms of biological role, this protein is involved in the repair of mismatches in DNA. It is required for dam-dependent methyl-directed DNA mismatch repair. May act as a 'molecular matchmaker', a protein that promotes the formation of a stable complex between two or more DNA-binding proteins in an ATP-dependent manner without itself being part of a final effector complex. The protein is DNA mismatch repair protein MutL of Bacillus cereus (strain Q1).